The following is a 393-amino-acid chain: NAD(P)H-quinone oxidoreductase subunit H, chloroplastic (393 aa).

This sequence belongs to the complex I 49 kDa subunit family. As to quaternary structure, NDH is composed of at least 16 different subunits, 5 of which are encoded in the nucleus.

Its subcellular location is the plastid. The protein resides in the chloroplast thylakoid membrane. The enzyme catalyses a plastoquinone + NADH + (n+1) H(+)(in) = a plastoquinol + NAD(+) + n H(+)(out). It carries out the reaction a plastoquinone + NADPH + (n+1) H(+)(in) = a plastoquinol + NADP(+) + n H(+)(out). In terms of biological role, NDH shuttles electrons from NAD(P)H:plastoquinone, via FMN and iron-sulfur (Fe-S) centers, to quinones in the photosynthetic chain and possibly in a chloroplast respiratory chain. The immediate electron acceptor for the enzyme in this species is believed to be plastoquinone. Couples the redox reaction to proton translocation, and thus conserves the redox energy in a proton gradient. This Gossypium barbadense (Sea Island cotton) protein is NAD(P)H-quinone oxidoreductase subunit H, chloroplastic.